A 47-amino-acid chain; its full sequence is NADH dehydrogenase [ubiquinone] iron-sulfur protein 2 (47 aa).

The protein belongs to the complex I 49 kDa subunit family. Complex I is composed of about 45 different subunits. This is a component of the iron-sulfur (IP) fragment of the enzyme.

Its subcellular location is the mitochondrion inner membrane. The catalysed reaction is a ubiquinone + NADH + 5 H(+)(in) = a ubiquinol + NAD(+) + 4 H(+)(out). Core subunit of the mitochondrial membrane respiratory chain NADH dehydrogenase (Complex I) that is believed to belong to the minimal assembly required for catalysis. Complex I functions in the transfer of electrons from NADH to the respiratory chain. The immediate electron acceptor for the enzyme is believed to be ubiquinone. Component of the iron-sulfur (IP) fragment of the enzyme. The sequence is that of NADH dehydrogenase [ubiquinone] iron-sulfur protein 2 (NAD7) from Solanum tuberosum (Potato).